The primary structure comprises 305 residues: MSIRILPENEIKPSASAFEIPPLLFANPKNLYTRRAKRLRELAKNNPLRDYLEFAAHLVDIQLTLLETAPIGNYAEKLTAYLTENQGQKPLNKQQFARDEKWLELLLALIKQCKPYATGAILTTLEFLEKASYAELNNLADHLLNERYEQVSPDQSVFIWLALSLYWTQLAQQLPRHTQAEIGERHTCPVCGSAPITSVIHLDKTQGLRYLHCALCESEWNMTRAQCSNCDESGDLNYWSFDTVEAPIKAESCGDCHSYLKVLYQEKDPYVEPLADDLASLMLDIEMEQKGFVRSGLNPFLFSIE.

Belongs to the FdhE family.

It localises to the cytoplasm. Necessary for formate dehydrogenase activity. This chain is Protein FdhE homolog, found in Haemophilus ducreyi (strain 35000HP / ATCC 700724).